The chain runs to 284 residues: NAD kinase (284 aa).

Aspartate 60 (proton acceptor) is an active-site residue. NAD(+)-binding positions include aspartate 60–glycine 61, asparagine 134–glutamate 135, arginine 145, lysine 162, aspartate 164, threonine 175–serine 180, and glutamine 234.

It belongs to the NAD kinase family. A divalent metal cation serves as cofactor.

It localises to the cytoplasm. It carries out the reaction NAD(+) + ATP = ADP + NADP(+) + H(+). Functionally, involved in the regulation of the intracellular balance of NAD and NADP, and is a key enzyme in the biosynthesis of NADP. Catalyzes specifically the phosphorylation on 2'-hydroxyl of the adenosine moiety of NAD to yield NADP. The protein is NAD kinase of Clostridium botulinum (strain Eklund 17B / Type B).